The sequence spans 146 residues: Pseudoazurin (146 aa).

Positions 1 to 23 are cleaved as a signal peptide; the sequence is MRNIAIKFAAAGILAMLAAPALA. Positions 28 to 116 constitute a Plastocyanin-like domain; it reads VHMLNKGAEG…MGMIALIAVG (89 aa). 4 residues coordinate Cu cation: His63, Cys101, His104, and Met109.

Requires Cu cation as cofactor.

Its subcellular location is the periplasm. This soluble electron transfer copper protein is required for the inactivation of copper-containing nitrite reductase in the presence of oxygen. Serves as a direct electron donor to the nitrite reductase. The protein is Pseudoazurin of Alcaligenes faecalis.